A 213-amino-acid chain; its full sequence is High frequency lysogenization protein HflD homolog (213 aa).

It belongs to the HflD family.

It localises to the cytoplasm. Its subcellular location is the cell inner membrane. The chain is High frequency lysogenization protein HflD homolog from Alcanivorax borkumensis (strain ATCC 700651 / DSM 11573 / NCIMB 13689 / SK2).